The sequence spans 291 residues: Dihydroorotate dehydrogenase B (NAD(+)), catalytic subunit (291 aa).

FMN is bound by residues serine 17 and 42-43; that span reads KT. Residues lysine 42, 67–71, and asparagine 118 contribute to the substrate site; that span reads NAIGL. Asparagine 118 is a binding site for FMN. The active-site Nucleophile is the serine 121. 2 residues coordinate FMN: lysine 153 and isoleucine 178. 179–180 contacts substrate; that stretch reads NT. Residues glycine 204, 230–231, and 252–253 contribute to the FMN site; these read GG and GT.

Belongs to the dihydroorotate dehydrogenase family. Type 1 subfamily. Heterotetramer of 2 PyrK and 2 PyrD type B subunits. Requires FMN as cofactor.

The protein localises to the cytoplasm. It carries out the reaction (S)-dihydroorotate + NAD(+) = orotate + NADH + H(+). It functions in the pathway pyrimidine metabolism; UMP biosynthesis via de novo pathway; orotate from (S)-dihydroorotate (NAD(+) route): step 1/1. Functionally, catalyzes the conversion of dihydroorotate to orotate with NAD(+) as electron acceptor. The polypeptide is Dihydroorotate dehydrogenase B (NAD(+)), catalytic subunit (pyrD) (Sulfolobus acidocaldarius (strain ATCC 33909 / DSM 639 / JCM 8929 / NBRC 15157 / NCIMB 11770)).